Consider the following 1790-residue polypeptide: Cytokinesis protein sepA (1790 aa).

Disordered regions lie at residues 1–275 and 328–350; these read MPTS…YLTR and GEQKRKQKARETHGYDGPSGILE. Residues 24–35 show a composition bias toward basic and acidic residues; it reads ERPVEDRWDAHG. 2 stretches are compositionally biased toward low complexity: residues 39–62 and 187–203; these read SLAPPSSAAGSRSSRYSKRSSIQS and SHHSSSTVDSSTNSRMS. A compositionally biased stretch (polar residues) spans 205 to 236; that stretch reads DQASIHSSLSSNTRGSSYISTDGSSRTTLPSH. The 429-residue stretch at 274–702 folds into the GBD/FH3 domain; that stretch reads TRPRDDRVVD…YVAMDRRLPD (429 aa). The span at 328 to 341 shows a compositional bias: basic and acidic residues; sequence GEQKRKQKARETHG. A coiled-coil region spans residues 724-811; the sequence is AEARRAYDES…QRNELETREL (88 aa). Residues 955–1136 enclose the FH1 domain; sequence DPEQATGLLG…NYLASQGAPS (182 aa). Basic and acidic residues predominate over residues 975 to 986; the sequence is ADDAKDEGKPTE. Disordered stretches follow at residues 975–1119, 1465–1484, and 1596–1790; these read ADDA…PPGT, NLSDPKKFHPQDRVSQITQR, and RAAA…PSTS. 2 stretches are compositionally biased toward pro residues: residues 1015 to 1026 and 1033 to 1118; these read APPPPPPPPPAH and APPP…PPPG. The FH2 domain occupies 1141–1564; that stretch reads VMSSIRPKKK…TEASLARKRI (424 aa). Positions 1435-1566 form a coiled coil; sequence LQKLNVDQLR…ASLARKRINV (132 aa). The DAD domain maps to 1581–1613; the sequence is SPATSGAMDSLLEKLRAAAPQAKDQRDRRRRAR. Basic residues predominate over residues 1608–1620; it reads RRRRARLKERHQV. Residues 1644 to 1661 are compositionally biased toward polar residues; sequence SGATDTNATDSSLLSPTI. Residues 1694 to 1710 are compositionally biased toward basic and acidic residues; sequence PDPERTRRRRESAEEER. Positions 1720 to 1746 are enriched in polar residues; sequence GATSGSKDSNDTTPLSPVTEPTSTQGE.

The protein belongs to the formin homology family. BNI1 subfamily.

Its function is as follows. Involved in cytokinesis. Overexpression results in growth inhibition. The protein is Cytokinesis protein sepA (sepA) of Emericella nidulans (strain FGSC A4 / ATCC 38163 / CBS 112.46 / NRRL 194 / M139) (Aspergillus nidulans).